A 156-amino-acid polypeptide reads, in one-letter code: Endogenous retrovirus group K member 24 Pro protein (156 aa).

Residues 21–96 (FEGLVDTGAD…IPLNLWGRDL (76 aa)) form the Peptidase A2 domain. D26 is a catalytic residue. The 46-residue stretch at 111–156 (YSPTSQKIMTKMGYIPGKGLGKNEDGIKIPFEAKINQKREGIGYPF) folds into the G-patch domain.

Belongs to the peptidase A2 family. HERV class-II K(HML-2) subfamily. In terms of assembly, active as a homodimer. Autoproteolytically processed at the N-terminus. Expected C-terminal autoprocessing not detected. The sequence shown is that of the processed Pro protein.

It catalyses the reaction Processing at the authentic HIV-1 PR recognition site and release of the mature p17 matrix and the p24 capsid protein, as a result of the cleavage of the -SQNY-|-PIVQ- cleavage site.. Its function is as follows. Retroviral proteases have roles in processing of the primary translation products and the maturation of the viral particle. Endogenous Pro proteins may have kept, lost or modified their original function during evolution. This endogenous protein has retained most of the characteristics of retroviral proteases. In Homo sapiens (Human), this protein is Endogenous retrovirus group K member 24 Pro protein (ERVK-24).